The following is a 98-amino-acid chain: MANIKSAIKRVQIAERNRLRNKAYKSAVKTLVKHCFTAFDAYAADPNETARQAVNERLSAAYSKIDKAVKRGVLHANTGARKKARLAKAFHLKVDPQA.

It belongs to the bacterial ribosomal protein bS20 family.

Its function is as follows. Binds directly to 16S ribosomal RNA. The sequence is that of Small ribosomal subunit protein bS20 from Synechococcus elongatus (strain ATCC 33912 / PCC 7942 / FACHB-805) (Anacystis nidulans R2).